The primary structure comprises 346 residues: Histidinol-phosphate aminotransferase (346 aa).

N6-(pyridoxal phosphate)lysine is present on Lys209.

It belongs to the class-II pyridoxal-phosphate-dependent aminotransferase family. Histidinol-phosphate aminotransferase subfamily. In terms of assembly, homodimer. The cofactor is pyridoxal 5'-phosphate.

It carries out the reaction L-histidinol phosphate + 2-oxoglutarate = 3-(imidazol-4-yl)-2-oxopropyl phosphate + L-glutamate. It participates in amino-acid biosynthesis; L-histidine biosynthesis; L-histidine from 5-phospho-alpha-D-ribose 1-diphosphate: step 7/9. This is Histidinol-phosphate aminotransferase from Vibrio parahaemolyticus serotype O3:K6 (strain RIMD 2210633).